The sequence spans 447 residues: Argininosuccinate synthase (447 aa).

ATP is bound by residues 17–25 (AFSGGLDTS) and alanine 43. Tyrosine 99 serves as a coordination point for L-citrulline. Positions 129 and 131 each coordinate ATP. Residues threonine 131, asparagine 135, and aspartate 136 each coordinate L-aspartate. Asparagine 135 contributes to the L-citrulline binding site. Aspartate 136 lines the ATP pocket. L-citrulline contacts are provided by arginine 139 and serine 192. An ATP-binding site is contributed by aspartate 194. The L-citrulline site is built by threonine 201, glutamate 203, and glutamate 280.

It belongs to the argininosuccinate synthase family. Type 2 subfamily. Homotetramer.

Its subcellular location is the cytoplasm. It catalyses the reaction L-citrulline + L-aspartate + ATP = 2-(N(omega)-L-arginino)succinate + AMP + diphosphate + H(+). Its pathway is amino-acid biosynthesis; L-arginine biosynthesis; L-arginine from L-ornithine and carbamoyl phosphate: step 2/3. This is Argininosuccinate synthase from Paracidovorax citrulli (strain AAC00-1) (Acidovorax citrulli).